We begin with the raw amino-acid sequence, 445 residues long: Mutanase Pc12g07500 (445 aa).

The N-terminal stretch at 1 to 21 (MIWKSLFSALAILTHILPALT) is a signal peptide. Residues asparagine 386 and asparagine 437 are each glycosylated (N-linked (GlcNAc...) asparagine).

Belongs to the glycosyl hydrolase 71 family. As to quaternary structure, monomer.

It is found in the secreted. It carries out the reaction Endohydrolysis of (1-&gt;3)-alpha-D-glucosidic linkages in isolichenin, pseudonigeran and nigeran.. Its function is as follows. Hydrolyzes 1,3-alpha-glucan predominantly into pentasaccharides. May enhance the efficacy of fungal antibiotics by degrading bacterial exopolysaccharides. In Penicillium rubens (strain ATCC 28089 / DSM 1075 / NRRL 1951 / Wisconsin 54-1255) (Penicillium chrysogenum), this protein is Mutanase Pc12g07500.